The sequence spans 465 residues: Probable tRNA modification GTPase MnmE (465 aa).

Positions 23, 85, and 124 each coordinate (6S)-5-formyl-5,6,7,8-tetrahydrofolate. One can recognise a TrmE-type G domain in the interval 221-384 (GTKVCIIGKP…LNNCILDLSS (164 aa)). GTP is bound by residues 231–236 (NVGKSS), 250–256 (TNFPGTT), and 275–278 (DTAG). Positions 235 and 256 each coordinate Mg(2+). Lys-465 serves as a coordination point for (6S)-5-formyl-5,6,7,8-tetrahydrofolate.

The protein belongs to the TRAFAC class TrmE-Era-EngA-EngB-Septin-like GTPase superfamily. TrmE GTPase family. K(+) serves as cofactor.

It localises to the plastid. The protein localises to the chloroplast. Its function is as follows. Exhibits a very high intrinsic GTPase hydrolysis rate. Involved in the addition of a carboxymethylaminomethyl (cmnm) group at the wobble position (U34) of certain tRNAs, forming tRNA-cmnm(5)s(2)U34. This chain is Probable tRNA modification GTPase MnmE, found in Cyanidium caldarium (Red alga).